The sequence spans 198 residues: dITP/XTP pyrophosphatase (198 aa).

A substrate-binding site is contributed by 11–16 (THNPGK). 2 residues coordinate Mg(2+): glutamate 44 and aspartate 73. Aspartate 73 (proton acceptor) is an active-site residue. Substrate is bound by residues serine 74, 156-159 (FGYD), lysine 179, and 184-185 (HR).

Belongs to the HAM1 NTPase family. Homodimer. The cofactor is Mg(2+).

The catalysed reaction is XTP + H2O = XMP + diphosphate + H(+). It catalyses the reaction dITP + H2O = dIMP + diphosphate + H(+). The enzyme catalyses ITP + H2O = IMP + diphosphate + H(+). Functionally, pyrophosphatase that catalyzes the hydrolysis of nucleoside triphosphates to their monophosphate derivatives, with a high preference for the non-canonical purine nucleotides XTP (xanthosine triphosphate), dITP (deoxyinosine triphosphate) and ITP. Seems to function as a house-cleaning enzyme that removes non-canonical purine nucleotides from the nucleotide pool, thus preventing their incorporation into DNA/RNA and avoiding chromosomal lesions. The chain is dITP/XTP pyrophosphatase (ysnA) from Bacillus subtilis (strain 168).